The following is a 101-amino-acid chain: Small ribosomal subunit protein bS18c (101 aa).

This sequence belongs to the bacterial ribosomal protein bS18 family. As to quaternary structure, part of the 30S ribosomal subunit.

The protein resides in the plastid. Its subcellular location is the chloroplast. In Gossypium hirsutum (Upland cotton), this protein is Small ribosomal subunit protein bS18c.